Consider the following 729-residue polypeptide: Ribosomal RNA large subunit methyltransferase K/L (729 aa).

The THUMP domain occupies 47 to 158; that stretch reads TFYRLCLWSR…KNELTLALDL (112 aa).

The protein belongs to the methyltransferase superfamily. RlmKL family.

The protein localises to the cytoplasm. The catalysed reaction is guanosine(2445) in 23S rRNA + S-adenosyl-L-methionine = N(2)-methylguanosine(2445) in 23S rRNA + S-adenosyl-L-homocysteine + H(+). The enzyme catalyses guanosine(2069) in 23S rRNA + S-adenosyl-L-methionine = N(2)-methylguanosine(2069) in 23S rRNA + S-adenosyl-L-homocysteine + H(+). Its function is as follows. Specifically methylates the guanine in position 2445 (m2G2445) and the guanine in position 2069 (m7G2069) of 23S rRNA. In Dichelobacter nodosus (strain VCS1703A), this protein is Ribosomal RNA large subunit methyltransferase K/L.